A 238-amino-acid polypeptide reads, in one-letter code: Ribonuclease PH (238 aa).

Phosphate contacts are provided by residues R86 and G124 to R126.

This sequence belongs to the RNase PH family. As to quaternary structure, homohexameric ring arranged as a trimer of dimers.

It catalyses the reaction tRNA(n+1) + phosphate = tRNA(n) + a ribonucleoside 5'-diphosphate. Phosphorolytic 3'-5' exoribonuclease that plays an important role in tRNA 3'-end maturation. Removes nucleotide residues following the 3'-CCA terminus of tRNAs; can also add nucleotides to the ends of RNA molecules by using nucleoside diphosphates as substrates, but this may not be physiologically important. Probably plays a role in initiation of 16S rRNA degradation (leading to ribosome degradation) during starvation. The sequence is that of Ribonuclease PH from Caulobacter vibrioides (strain ATCC 19089 / CIP 103742 / CB 15) (Caulobacter crescentus).